The chain runs to 271 residues: Mannosyl-3-phosphoglycerate phosphatase (271 aa).

D13 functions as the Nucleophile in the catalytic mechanism. Mg(2+) is bound by residues D13, D15, and D214.

Belongs to the HAD-like hydrolase superfamily. MPGP family. Mg(2+) serves as cofactor.

It is found in the cytoplasm. The enzyme catalyses 2-O-(alpha-D-mannosyl)-3-phosphoglycerate + H2O = (2R)-2-O-(alpha-D-mannosyl)-glycerate + phosphate. This chain is Mannosyl-3-phosphoglycerate phosphatase, found in Escherichia coli (strain K12 / DH10B).